The chain runs to 62 residues: uncharacterized protein (62 aa).

The protein localises to the plastid. The protein resides in the chloroplast. This is an uncharacterized protein from Guillardia theta (Cryptophyte).